The sequence spans 426 residues: Anaerobic glycerol-3-phosphate dehydrogenase subunit C (426 aa).

2 consecutive 4Fe-4S ferredoxin-type domains span residues 21 to 53 and 67 to 99; these read SYKY…LYPG and KSAE…GDLI. Cys-32, Cys-35, Cys-38, Cys-42, Cys-79, Cys-82, Cys-85, and Cys-89 together coordinate [4Fe-4S] cluster.

Composed of a catalytic GlpA/B dimer and of GlpC.

It is found in the cell inner membrane. It participates in polyol metabolism; glycerol degradation via glycerol kinase pathway; glycerone phosphate from sn-glycerol 3-phosphate (anaerobic route): step 1/1. Its function is as follows. Electron transfer protein; may also function as the membrane anchor for the GlpAB dimer. The sequence is that of Anaerobic glycerol-3-phosphate dehydrogenase subunit C (glpC) from Haemophilus influenzae (strain ATCC 51907 / DSM 11121 / KW20 / Rd).